The chain runs to 260 residues: DNA repair protein RecO (260 aa).

It belongs to the RecO family.

In terms of biological role, involved in DNA repair and RecF pathway recombination. This chain is DNA repair protein RecO, found in Paracidovorax citrulli (strain AAC00-1) (Acidovorax citrulli).